The primary structure comprises 63 residues: Large ribosomal subunit protein uL29 (63 aa).

This sequence belongs to the universal ribosomal protein uL29 family.

The chain is Large ribosomal subunit protein uL29 from Aliivibrio fischeri (strain ATCC 700601 / ES114) (Vibrio fischeri).